The following is a 171-amino-acid chain: Ly6/PLAUR domain-containing protein 6 (171 aa).

An N-terminal signal peptide occupies residues 1–25 (MEPSPALAWLLLLSLVADCLKAAQS). Residues 47-141 (FKCFTCEKAA…PRNETDATFA (95 aa)) enclose the UPAR/Ly6 domain. Disulfide bonds link cysteine 49–cysteine 77, cysteine 52–cysteine 61, cysteine 70–cysteine 96, cysteine 102–cysteine 121, cysteine 107–cysteine 118, and cysteine 122–cysteine 127. A NxI motif motif is present at residues 88-90 (NSI). N-linked (GlcNAc...) asparagine glycosylation is found at asparagine 134 and asparagine 147. The GPI-anchor amidated asparagine moiety is linked to residue asparagine 147. Positions 148–171 (QTNGHPHCVSVIVSCLWVWLGLTL) are cleaved as a propeptide — removed in mature form.

Interacts with nicotinic acetylcholine receptors (nAChRs) including CHRNA3, CHRNA4, CHRNA5, CHRNA6, CHRNA7, CHRNB2 and CHRNB4. Interacts (via NxI motif) with LRP6. Detected in the frontal cortex and hippocampus (at protein level). Highly expressed in the brain and spinal cord, as well as dorsal root and trigeminal ganglia.

It is found in the secreted. It localises to the cytoplasm. The protein localises to the cell membrane. Its subcellular location is the synapse. The protein resides in the synaptosome. It is found in the membrane raft. It localises to the cell projection. The protein localises to the dendrite. Its subcellular location is the perikaryon. Its function is as follows. Acts as a modulator of nicotinic acetylcholine receptors (nAChRs) function in the brain. Inhibits nicotine-induced Ca(2+) influx through nAChRs. In vitro, specifically inhibits alpha-3:beta-4 and alpha-7 nAChR currents in an allosteric manner. Acts as a positive regulator of Wnt/beta-catenin signaling. The polypeptide is Ly6/PLAUR domain-containing protein 6 (Lypd6) (Mus musculus (Mouse)).